The primary structure comprises 379 residues: Cytochrome b (379 aa).

Transmembrane regions (helical) follow at residues 32–52, 76–97, 112–132, and 177–197; these read FGSL…FLAM, WLIR…YMHI, WNVG…GYVL, and FFAF…IHLL. The heme b site is built by histidine 82 and histidine 96. Residues histidine 181 and histidine 195 each coordinate heme b. Histidine 200 is a binding site for a ubiquinone. 4 helical membrane-spanning segments follow: residues 225 to 245, 287 to 307, 319 to 339, and 346 to 366; these read YKDL…ALFS, LGGV…PFLH, LTQI…WIGG, and FIII…VLSP.

This sequence belongs to the cytochrome b family. The cytochrome bc1 complex contains 3 respiratory subunits (MT-CYB, CYC1 and UQCRFS1), 2 core proteins (UQCRC1 and UQCRC2) and probably 6 low-molecular weight proteins. It depends on heme b as a cofactor.

It is found in the mitochondrion inner membrane. Component of the ubiquinol-cytochrome c reductase complex (complex III or cytochrome b-c1 complex) that is part of the mitochondrial respiratory chain. The b-c1 complex mediates electron transfer from ubiquinol to cytochrome c. Contributes to the generation of a proton gradient across the mitochondrial membrane that is then used for ATP synthesis. This chain is Cytochrome b (mt-cyb), found in Chlorophthalmus agassizi (Shortnose greeneye).